The chain runs to 202 residues: Dephospho-CoA kinase (202 aa).

Positions Val-4 to Asn-201 constitute a DPCK domain. Ala-12–Thr-17 is an ATP binding site.

It belongs to the CoaE family.

The protein resides in the cytoplasm. It carries out the reaction 3'-dephospho-CoA + ATP = ADP + CoA + H(+). Its pathway is cofactor biosynthesis; coenzyme A biosynthesis; CoA from (R)-pantothenate: step 5/5. In terms of biological role, catalyzes the phosphorylation of the 3'-hydroxyl group of dephosphocoenzyme A to form coenzyme A. The protein is Dephospho-CoA kinase of Vibrio vulnificus (strain YJ016).